Here is a 1224-residue protein sequence, read N- to C-terminus: Protein MSN5 (1224 aa).

The segment at 1200–1224 (NKENGDMLDDPNIEDGAVGNLFDDN) is disordered.

As to quaternary structure, interacts with CEX1.

The protein is Protein MSN5 (MSN5) of Saccharomyces cerevisiae (strain ATCC 204508 / S288c) (Baker's yeast).